A 78-amino-acid chain; its full sequence is Putative DPH3 homolog B (78 aa).

One can recognise a DPH-type MB domain in the interval 4–60; it reads FHDEVEIEDFQYDEDSETYFCPCPCGDNFSITKEELENGEGVAMCPGCSLIIKVIYD. The Zn(2+) site is built by cysteine 26, cysteine 28, cysteine 48, and cysteine 51.

This sequence belongs to the DPH3 family.

The polypeptide is Putative DPH3 homolog B (DPH3P1) (Homo sapiens (Human)).